Reading from the N-terminus, the 557-residue chain is Dihydroxy-acid dehydratase (557 aa).

Cys49 lines the [2Fe-2S] cluster pocket. Asp81 contacts Mg(2+). Cys122 contacts [2Fe-2S] cluster. Positions 123 and 124 each coordinate Mg(2+). Position 124 is an N6-carboxylysine (Lys124). [2Fe-2S] cluster is bound at residue Cys194. Glu446 provides a ligand contact to Mg(2+). Residue Ser472 is the Proton acceptor of the active site.

The protein belongs to the IlvD/Edd family. In terms of assembly, homodimer. The cofactor is [2Fe-2S] cluster. Requires Mg(2+) as cofactor.

It carries out the reaction (2R)-2,3-dihydroxy-3-methylbutanoate = 3-methyl-2-oxobutanoate + H2O. The catalysed reaction is (2R,3R)-2,3-dihydroxy-3-methylpentanoate = (S)-3-methyl-2-oxopentanoate + H2O. The protein operates within amino-acid biosynthesis; L-isoleucine biosynthesis; L-isoleucine from 2-oxobutanoate: step 3/4. Its pathway is amino-acid biosynthesis; L-valine biosynthesis; L-valine from pyruvate: step 3/4. Its function is as follows. Functions in the biosynthesis of branched-chain amino acids. Catalyzes the dehydration of (2R,3R)-2,3-dihydroxy-3-methylpentanoate (2,3-dihydroxy-3-methylvalerate) into 2-oxo-3-methylpentanoate (2-oxo-3-methylvalerate) and of (2R)-2,3-dihydroxy-3-methylbutanoate (2,3-dihydroxyisovalerate) into 2-oxo-3-methylbutanoate (2-oxoisovalerate), the penultimate precursor to L-isoleucine and L-valine, respectively. This Prochlorococcus marinus (strain MIT 9215) protein is Dihydroxy-acid dehydratase.